Consider the following 336-residue polypeptide: uncharacterized protein (336 aa).

The segment at 196-222 (YKEGDDSNWDDFGSESEDDSKEAHSEE) is disordered. The span at 201-215 (DSNWDDFGSESEDDS) shows a compositional bias: acidic residues. A Phosphoserine modification is found at Ser-211.

This is an uncharacterized protein from Schizosaccharomyces pombe (strain 972 / ATCC 24843) (Fission yeast).